We begin with the raw amino-acid sequence, 413 residues long: Cell surface GPI-anchored protein ECM33 (413 aa).

Positions 1 to 20 (MQIKSFLLPIVAALLTSVSA) are cleaved as a signal peptide. N93, N102, N172, N209, N222, N227, N279, N290, N306, N322, and N382 each carry an N-linked (GlcNAc...) asparagine glycan. Positions 347–390 (YVCTHPANPSSSSKSGSSTQTGKSDSKSSDGSSSSNSSSSSKKG) are disordered. The span at 356-390 (SSSSKSGSSTQTGKSDSKSSDGSSSSNSSSSSKKG) shows a compositional bias: low complexity. A lipid anchor (GPI-anchor amidated glycine) is attached at G390. A propeptide spans 391–413 (ASNVLVVPGMVLTTALGVLLALI) (removed in mature form).

It belongs to the SPS2 family.

The protein resides in the cell membrane. It localises to the secreted. Its subcellular location is the cell wall. Functionally, cell surface protein required for proper cell wall integrity and for the correct assembly of the mannoprotein outer layer of the cell wall. The protein is Cell surface GPI-anchored protein ECM33 (ECM331) of Candida albicans (strain SC5314 / ATCC MYA-2876) (Yeast).